We begin with the raw amino-acid sequence, 64 residues long: Small ribosomal subunit protein bS21 (64 aa).

The disordered stretch occupies residues 37 to 64 (EKPSVKRKRKEKEAQRRLRKKMRMMKKA). Over residues 53–64 (RLRKKMRMMKKA) the composition is skewed to basic residues.

This sequence belongs to the bacterial ribosomal protein bS21 family.

The protein is Small ribosomal subunit protein bS21 of Syntrophotalea carbinolica (strain DSM 2380 / NBRC 103641 / GraBd1) (Pelobacter carbinolicus).